Consider the following 244-residue polypeptide: MAFTFKQFHIDDFGCGMPVSTDAVILGAWAPLSDAQNILDIGAGSGLLSLMATQRSNAKVTSIELDDTAVNACQKNFEASPWTSRLTVKHSSVQEFSKQHQESEESLFDHIICNPPYFKGGTQSQNRLRAQARHTDTLDFCALLEAIGSLLAPNGTASLILPSQSMSEFGLVLADSSLEFSQVTDISDSQRKTPHRHLFTLCHKSTDASAKPNEGATEHFCIKELDGSYTEEMKLLITGFYLKY.

This sequence belongs to the methyltransferase superfamily. tRNA (adenine-N(6)-)-methyltransferase family.

It is found in the cytoplasm. It catalyses the reaction adenosine(37) in tRNA1(Val) + S-adenosyl-L-methionine = N(6)-methyladenosine(37) in tRNA1(Val) + S-adenosyl-L-homocysteine + H(+). Its function is as follows. Specifically methylates the adenine in position 37 of tRNA(1)(Val) (anticodon cmo5UAC). The chain is tRNA1(Val) (adenine(37)-N6)-methyltransferase from Shewanella sediminis (strain HAW-EB3).